A 969-amino-acid chain; its full sequence is Alpha-glucosidase (969 aa).

Positions 1-24 are cleaved as a signal peptide; that stretch reads MMISTAYQSLFLTALFSAISIAVG. Residues Asn37, Asn67, Asn99, Asn116, Asn139, Asn146, Asn209, Asn245, Asn249, Asn331, Asn406, Asn429, Asn462, and Asn470 are each glycosylated (N-linked (GlcNAc...) asparagine). The active-site Nucleophile is Asp481. The active site involves Glu484. 3 N-linked (GlcNAc...) asparagine glycosylation sites follow: Asn520, Asn523, and Asn589. The Proton donor role is filled by Asp647. 10 N-linked (GlcNAc...) asparagine glycosylation sites follow: Asn648, Asn801, Asn810, Asn821, Asn885, Asn915, Asn934, Asn942, Asn954, and Asn966.

It belongs to the glycosyl hydrolase 31 family.

It localises to the secreted. It catalyses the reaction Hydrolysis of terminal, non-reducing (1-&gt;4)-linked alpha-D-glucose residues with release of alpha-D-glucose.. Hydrolyzes malto-oligosaccharides, but has a low activity toward soluble starch. The sequence is that of Alpha-glucosidase (agl1) from Schizosaccharomyces pombe (strain 972 / ATCC 24843) (Fission yeast).